The sequence spans 127 residues: Large ribosomal subunit protein uL24 (127 aa).

Belongs to the universal ribosomal protein uL24 family. As to quaternary structure, component of the large ribosomal subunit. Mature ribosomes consist of a small (40S) and a large (60S) subunit. The 40S subunit contains about 32 different proteins and 1 molecule of RNA (18S). The 60S subunit contains 45 different proteins and 3 molecules of RNA (25S, 5.8S and 5S).

The protein localises to the cytoplasm. Its function is as follows. Component of the ribosome, a large ribonucleoprotein complex responsible for the synthesis of proteins in the cell. The small ribosomal subunit (SSU) binds messenger RNAs (mRNAs) and translates the encoded message by selecting cognate aminoacyl-transfer RNA (tRNA) molecules. The large subunit (LSU) contains the ribosomal catalytic site termed the peptidyl transferase center (PTC), which catalyzes the formation of peptide bonds, thereby polymerizing the amino acids delivered by tRNAs into a polypeptide chain. The nascent polypeptides leave the ribosome through a tunnel in the LSU and interact with protein factors that function in enzymatic processing, targeting, and the membrane insertion of nascent chains at the exit of the ribosomal tunnel. This chain is Large ribosomal subunit protein uL24, found in Candida albicans (strain SC5314 / ATCC MYA-2876) (Yeast).